A 147-amino-acid chain; its full sequence is Large ribosomal subunit protein bL9 (147 aa).

It belongs to the bacterial ribosomal protein bL9 family.

Functionally, binds to the 23S rRNA. In Helicobacter hepaticus (strain ATCC 51449 / 3B1), this protein is Large ribosomal subunit protein bL9.